The following is a 468-amino-acid chain: Glutamate--tRNA ligase (468 aa).

A 'HIGH' region motif is present at residues 14-24 (PSPTGFIHLGN). Residues 246-250 (KMSKR) carry the 'KMSKS' region motif. Lys-249 is an ATP binding site.

The protein belongs to the class-I aminoacyl-tRNA synthetase family. Glutamate--tRNA ligase type 1 subfamily. Monomer.

Its subcellular location is the cytoplasm. The catalysed reaction is tRNA(Glu) + L-glutamate + ATP = L-glutamyl-tRNA(Glu) + AMP + diphosphate. Its function is as follows. Catalyzes the attachment of glutamate to tRNA(Glu) in a two-step reaction: glutamate is first activated by ATP to form Glu-AMP and then transferred to the acceptor end of tRNA(Glu). The polypeptide is Glutamate--tRNA ligase (Leptothrix cholodnii (strain ATCC 51168 / LMG 8142 / SP-6) (Leptothrix discophora (strain SP-6))).